We begin with the raw amino-acid sequence, 402 residues long: Potassium channel subfamily K member 9 (402 aa).

At 1-8 (MKRQNVRT) the chain is on the cytoplasmic side. The chain crosses the membrane as a helical span at residues 9-29 (LSLIACTFTYLLVGAAVFDAL). Residues 30 to 88 (ESDHEMREEEKLKAEEVRLRGKYNISSDDYQQLELVILQSEPHRAGVQWKFAGSFYFAI) are Extracellular-facing. Asparagine 53 carries N-linked (GlcNAc...) asparagine glycosylation. Positions 89 to 101 (TVITTIGYGHAAP) form an intramembrane region, pore-forming. The K(+) site is built by threonine 93, isoleucine 94, glycine 95, and tyrosine 96. Positions 93-98 (TIGYGH) are selectivity filter 1. Topologically, residues 102-107 (GTDAGK) are extracellular. The helical transmembrane segment at 108 to 128 (AFCMFYAVLGIPLTLVMFQSL) threads the bilayer. The Cytoplasmic portion of the chain corresponds to 129–158 (GERMNTFVRYLLKRIKKCCGMRNTEVSMEN). A helical membrane pass occupies residues 159–179 (MVTVGFFSCMGTLCLGAAAFS). At 180 to 194 (QCEDWSFFHAYYYCF) the chain is on the extracellular side. The pore-forming intramembrane region spans 195-207 (ITLTTIGFGDFVA). Threonine 199, isoleucine 200, glycine 201, and phenylalanine 202 together coordinate K(+). Residues 199–204 (TIGFGD) form a selectivity filter 2 region. Residues 208 to 218 (LQAKGALQRKP) are Extracellular-facing. Residues 219–239 (FYVAFSFMYILVGLTVIGAFL) traverse the membrane as a helical segment. Topologically, residues 240 to 402 (NLVVLRFLTM…HRLHLRRKSI (163 aa)) are cytoplasmic. The X-gate stretch occupies residues 243 to 248 (VLRFLT).

Belongs to the two pore domain potassium channel (TC 1.A.1.8) family. As to quaternary structure, homodimer. Heterodimer with KCNK1. Heterodimer with KCNK3. Expressed in adrenal glands mainly in outer zona glomerulosa and inner zona medullaris. Expressed in retinal ganglion cells. Expressed in dentate gyrus (at protein level).

It localises to the cell membrane. The protein resides in the mitochondrion inner membrane. The protein localises to the cell projection. Its subcellular location is the dendrite. The catalysed reaction is K(+)(in) = K(+)(out). The enzyme catalyses Na(+)(in) = Na(+)(out). With respect to regulation, inhibited by NTS:NTSR1 signaling in dentate gyrus granule cells. K(+) channel that conducts voltage-dependent outward rectifying currents upon membrane depolarization. Voltage sensing is coupled to K(+) electrochemical gradient in an 'ion flux gating' mode where outward but not inward ion flow opens the gate. Changes ion selectivity and becomes permeable to Na(+) ions in response to extracellular acidification. Protonation of the pH sensor His-98 stabilizes C-type inactivation conformation likely converting the channel from outward K(+)-conducting, to inward Na(+)-conducting to nonconductive state. Homo- and heterodimerizes to form functional channels with distinct regulatory and gating properties. Allows K(+) currents with fast-gating kinetics important for the repolarization and hyperpolarization phases of action potentials. In granule neurons, hyperpolarizes the resting membrane potential to limit intrinsic neuronal excitability, but once the action potential threshold is reached, supports high-frequency action potential firing and increased neuronal excitability. Homomeric and/or heteromeric KCNK3:KCNK9 channels operate in cerebellar granule cells, whereas heteromeric KCNK1:KCNK9 enables currents in hippocampal dentate gyrus granule neurons. Dispensable for central chemosensory respiration i.e. breathing controlled by brainstem CO2/pH, it rather conducts pH-sensitive currents and controls the firing rate of serotonergic raphe neurons involved in potentiation of the respiratory chemoreflex. In retinal ganglion cells, mediates outward rectifying currents that regulate action potentials in response to acidification of the synaptic cleft. Involved in transmission of image-forming and nonimage-forming visual information in the retina. In adrenal gland, contributes to the maintenance of a hyperpolarized resting membrane potential of aldosterone-producing cells at zona glomerulosa and limits aldosterone release as part of a regulatory mechanism that controls arterial blood pressure and electrolyte homeostasis. The polypeptide is Potassium channel subfamily K member 9 (Mus musculus (Mouse)).